We begin with the raw amino-acid sequence, 57 residues long: MLGWVVTFLVVALIAGILGFGGIAGASIEIAKIIFFIAVVLFLVSAVIGLARGRTRV.

Transmembrane regions (helical) follow at residues 4 to 24 and 30 to 50; these read WVVT…GGIA and IAKI…VIGL.

The protein belongs to the UPF0391 family.

The protein resides in the cell membrane. This chain is UPF0391 membrane protein RPE_2138, found in Rhodopseudomonas palustris (strain BisA53).